Reading from the N-terminus, the 430-residue chain is Proteinase-activated receptor 1 (430 aa).

Residues 1-21 (MGPRRLLIVALGLSLCGPLLS) form the signal peptide. Residues 22-41 (SRVPMSQPESERTDATVNPR) constitute a propeptide, removed for receptor activation. The Extracellular portion of the chain corresponds to 42–107 (SFFLRNPSEN…SGYLTSPWLT (66 aa)). 2 N-linked (GlcNAc...) asparagine glycosylation sites follow: N67 and N80. The helical transmembrane segment at 108-133 (LFMPSVYTIVFIVSLPLNVLAIAVFV) threads the bilayer. Residues 134-142 (LRMKVKKPA) are Cytoplasmic-facing. Residues 143 to 162 (VVYMLHLAMADVLFVSVLPF) form a helical membrane-spanning segment. Residues 163-181 (KISYYFSGTDWQFGSGMCR) are Extracellular-facing. C180 and C259 are disulfide-bonded. Residues 182 to 203 (FATAAFYGNMYASIMLMTVISI) traverse the membrane as a helical segment. Over 204–223 (DRFLAVVYPIQSLSWRTLGR) the chain is Cytoplasmic. A helical membrane pass occupies residues 224-244 (ANFTCVVIWVMAIMGVVPLLL). Residues 245–273 (KEQTTRVPGLNITTCHDVLSENLMQGFYS) are Extracellular-facing. A glycan (N-linked (GlcNAc...) asparagine) is linked at N255. Residues 274–293 (YYFSAFSAIFFLVPLIVSTV) form a helical membrane-spanning segment. The Cytoplasmic segment spans residues 294-316 (CYTSIIRCLSSSAVANRSKKSRA). The helical transmembrane segment at 317–339 (LFLSAAVFCIFIVCFGPTNVLLI) threads the bilayer. The Extracellular portion of the chain corresponds to 340-354 (VHYLFLSDSPGTEAA). Residues 355–379 (YFAYLLCVCVSSVSCCIDPLIYYYA) form a helical membrane-spanning segment. Over 380–430 (SSECQRHLYSILCCKESSDPNSCNSTGQLMPSKMDTCSSHLNNSIYKKLLA) the chain is Cytoplasmic. Position 423 is a phosphoserine (S423).

The protein belongs to the G-protein coupled receptor 1 family. Proteolytic cleavage by thrombin generates a new N-terminus that functions as a tethered ligand. Also proteolytically cleaved by cathepsin CTSG. In terms of processing, phosphorylated in the C-terminal tail; probably mediating desensitization prior to the uncoupling and internalization of the receptor.

The protein resides in the cell membrane. Functionally, high affinity receptor that binds the activated thrombin, leading to calcium release from intracellular stores. The thrombin-activated receptor signaling pathway is mediated through PTX-insensitive G proteins, activation of phospholipase C resulting in the production of 1D-myo-inositol 1,4,5-trisphosphate (InsP3) which binds to InsP3 receptors causing calcium release from the stores. In astrocytes, the calcium released into the cytosol allows the Ca(2+)-dependent release of L-glutamate into the synaptic cleft through BEST1, that targets the neuronal postsynaptic GRIN2A/NMDAR receptor resulting in the synaptic plasticity regulation. May play a role in platelets activation and in vascular development. Mediates up-regulation of pro-inflammatory cytokines, such as MCP-1/CCL2 and IL6, triggered by coagulation factor Xa (F10) in cardiac fibroblasts and umbilical vein endothelial cells. The polypeptide is Proteinase-activated receptor 1 (Mus musculus (Mouse)).